Consider the following 729-residue polypeptide: MSCCDLAAAGQLGKAGIMASDCEPALNQAESRNPTLERYLGALREAKNDSEQFAALLLVTKAVKAGDIDAKTRRRIFDAVGFTFPNRLLTTKEAPDGCPDHVLRALGVALLACFCSDPELAAHPQVLNKIPILSTFLTARGDPDDAARRSMVDDTYQCLTAVAGTPRGPRHLIAGGTVSALCQAYLGHGYGFDQALALLVGLLAAAETQCWKEAEPDLLAVLRGLSEDFQKAEDASKFELCQLLPLFLPPTTVPSECLRDLQAGLARILGSKLSSWQRNPALKLAARLAHACGSDWIPAGNSGSKFLALLVNLACVEVRLALEETGTEVKEDVVTACYALMELGIQECTRCEQSLLKEPQKVQLVSIMKEAIGAVIHYLQQVGPEKQKEPFVFASVRILGAWLAEETSSLRKEVCQLLPFLVRYAKTLYEEAEEANDLSQQVATLAISPTTPGPTWPGDALRLLLPGWCHLTVEDGPREILIKEGAPSLLCKYFLQQWELTSPGHDTSVLPDSVEIGLQTCCHIFLNLVVTAPGLIKRDACFTSLMNTLMASLPSLVQQQGRLLLAANVATLGLLMARLLSTSPALQGTPASRGFFAAAILFLSQSHVARATPGSEQAVLALSPDYEGVWADLQELWFLGMQAFTGCVPLLPWLAPAALRSRWPQELLQLLGSVSPNSVKPEMVAAYQGVLVELARANRLCREAMRLQAGEETASHYRMAALEQCLAEP.

The residue at position 2 (S2) is an N-acetylserine. At S2 the chain carries Phosphoserine. S-palmitoyl cysteine attachment occurs at residues C3 and C4. R75 carries the post-translational modification Asymmetric dimethylarginine. S448 carries the post-translational modification Phosphoserine.

It belongs to the neurochondrin family. In terms of assembly, interacts with MCHR1. Interacts with SEMA4C. Interacts with DIAPH1 (via FH3 domain). Interacts with GRM5. In terms of processing, palmitoylated. Palmitoylation by ZDHHC1, ZDHHC3 and ZDHHC11 regulates the association of NCDN with endosome membranes. May also be palmitoylated by ZDHHC7.

Its subcellular location is the cytoplasm. It is found in the cytosol. The protein resides in the endosome membrane. The protein localises to the cell projection. It localises to the dendrite. Its subcellular location is the postsynapse. Probably involved in signal transduction, in the nervous system, via increasing cell surface localization of GRM5 and positively regulating its signaling. Required for the spatial learning process. Acts as a negative regulator of Ca(2+)-calmodulin-dependent protein kinase 2 (CaMK2) phosphorylation. May play a role in modulating melanin-concentrating hormone-mediated functions via its interaction with MCHR1 that interferes with G protein-coupled signal transduction. May be involved in bone metabolism. May also be involved in neurite outgrowth. The sequence is that of Neurochondrin (NCDN) from Bos taurus (Bovine).